Here is a 246-residue protein sequence, read N- to C-terminus: Uridylate kinase (246 aa).

Lys13–Gly16 is an ATP binding site. Gly54 provides a ligand contact to UMP. ATP contacts are provided by Gly55 and Arg59. UMP-binding positions include Asp74 and Ala135–Thr142. ATP contacts are provided by Asn163, Tyr169, and Asp172.

It belongs to the UMP kinase family. As to quaternary structure, homohexamer.

The protein resides in the cytoplasm. It carries out the reaction UMP + ATP = UDP + ADP. Its pathway is pyrimidine metabolism; CTP biosynthesis via de novo pathway; UDP from UMP (UMPK route): step 1/1. With respect to regulation, inhibited by UTP. Catalyzes the reversible phosphorylation of UMP to UDP. In Bifidobacterium longum (strain NCC 2705), this protein is Uridylate kinase.